Consider the following 409-residue polypeptide: MSPCENDTPINWKRNLIVAWLGCFLTGAAFSLVMPFLPLYVEQLGVTGHSALNMWSGIVFSITFLFSAIASPFWGGLADRKGRKLMLLRSALGMGIVMVLMGLAQNIWQFLILRALLGLLGGFVPNANALIATQVPRNKSGWALGTLSTGGVSGALLGPMAGGLLADSYGLRPVFFITASVLILCFFVTLFCIREKFQPVSKKEMLHMREVVTSLKNPKLVLSLFVTTLIIQVATGSIAPILTLYVRELAGNVSNVAFISGMIASVPGVAALLLSAPRLGKLGDRIGPEKILITALIFSVLLLIPMSYVQTPLQLGILRFLLGAADGALLPAVQTLLVYNSSNQIAGRIFSYNQSFRDIGNVTGPLMGAAISANYGFRAVFLVTAGVVLFNAVYSWNSLRRRRIPQVSN.

Helical transmembrane passes span 16–36 (LIVA…VMPF), 58–78 (IVFS…GGLA), 92–112 (LGMG…QFLI), 115–135 (ALLG…ATQV), 146–166 (TLST…GLLA), 173–193 (PVFF…LFCI), 224–244 (LFVT…ILTL), 256–276 (VAFI…LLSA), 291–311 (ILIT…YVQT), and 379–399 (AVFL…WNSL).

This sequence belongs to the major facilitator superfamily. DHA1 family. MdtG (TC 2.A.1.2.20) subfamily.

It is found in the cell inner membrane. In terms of biological role, confers resistance to fosfomycin and deoxycholate. The polypeptide is Multidrug resistance protein MdtG (Escherichia coli O9:H4 (strain HS)).